The primary structure comprises 192 residues: uncharacterized protein (192 aa).

The region spanning 29 to 160 is the Nudix hydrolase domain; the sequence is QRQAAVLIPV…PLDVYRRGNS (132 aa). Positions 67–89 match the Nudix box motif; that stretch reads GAVDSTDASLIAAALREAQEEVA. The Mg(2+) site is built by Glu83 and Glu87.

Belongs to the Nudix hydrolase family. PCD1 subfamily. It depends on Mn(2+) as a cofactor. Mg(2+) is required as a cofactor.

Its function is as follows. Probably mediates the hydrolysis of some nucleoside diphosphate derivatives. This is an uncharacterized protein from Salmonella dublin (strain CT_02021853).